Here is a 31-residue protein sequence, read N- to C-terminus: Cytochrome b6-f complex subunit 6 (31 aa).

Residues 4 to 24 (VIAYLGLLASVLIGTIVIYLG) form a helical membrane-spanning segment.

It belongs to the PetL family. As to quaternary structure, the 4 large subunits of the cytochrome b6-f complex are cytochrome b6, subunit IV (17 kDa polypeptide, PetD), cytochrome f and the Rieske protein, while the 4 small subunits are PetG, PetL, PetM and PetN. The complex functions as a dimer.

The protein resides in the plastid. It localises to the chloroplast thylakoid membrane. In terms of biological role, component of the cytochrome b6-f complex, which mediates electron transfer between photosystem II (PSII) and photosystem I (PSI), cyclic electron flow around PSI, and state transitions. PetL is important for photoautotrophic growth as well as for electron transfer efficiency and stability of the cytochrome b6-f complex. This chain is Cytochrome b6-f complex subunit 6, found in Oltmannsiellopsis viridis (Marine flagellate).